An 83-amino-acid chain; its full sequence is Small proline-rich protein 2A3 (83 aa).

5 tandem repeats follow at residues Pro21–Pro29, Gln30–Pro38, Val39–Pro47, Ser48–Pro56, and Val57–Pro65. Positions Pro21–Pro65 are 5 X 9 AA approximate tandem repeats.

The protein belongs to the cornifin (SPRR) family. Forms five pairs of intrachain disulfide bonds.

It is found in the secreted. The protein resides in the extracellular space. Its subcellular location is the cytoplasmic vesicle. The protein localises to the secretory vesicle. In terms of biological role, gut bactericidal protein that selectively kills Gram-positive bacteria by binding to negatively charged lipids on bacterial membranes, leading to bacterial membrane permeabilization and disruption. Specifically binds lipids bearing negatively charged headgroups, such as phosphatidic acid, phosphatidylserine (PS), cardiolipin (CL), and phosphatidylinositol phosphates, but not to zwitterionic or neutral lipids. Induced by type-2 cytokines in response to helminth infection and is required to protect against helminth-induced bacterial invasion of intestinal tissue. May also be involved in the development of the cornified envelope of squamous epithelia; however, additional evidences are required to confirm this result in vivo. In Mus musculus (Mouse), this protein is Small proline-rich protein 2A3.